Here is a 536-residue protein sequence, read N- to C-terminus: Signal peptide peptidase-like 5 (536 aa).

The signal sequence occupies residues 1 to 29 (MSLPPFTCRLLAAAAALYLIGLLCVGADT). Over 30–186 (KDVTAPKIPG…VELLLYAPKS (157 aa)) the chain is Lumenal. Residues 94–170 (SNLTSKLSWS…TSSGDALKKS (77 aa)) form the PA domain. Asn95 and Asn151 each carry an N-linked (GlcNAc...) asparagine glycan. The chain crosses the membrane as a helical span at residues 187-207 (PIVDYAVVFLWLMSVGTVFVA). Residues 208–243 (SVWSHVTSPKKNDEQYDELSPKKSSNVDATKGGAEE) are Cytoplasmic-facing. Positions 218 to 238 (KNDEQYDELSPKKSSNVDATK) are disordered. A helical transmembrane segment spans residues 244–264 (ETLDISAMGAVIFVISASTFL). Over 265–273 (VLLFFFMSS) the chain is Lumenal. A helical transmembrane segment spans residues 274–296 (WFILILTIFFVIGGMQGMHNINV). Topologically, residues 297-318 (TLITRRCSKCGQKNLKLPLLGN) are cytoplasmic. Residues 319–339 (TSILSLVVLLFCFVVAILWFM) form a helical membrane-spanning segment. Residues 340-344 (NRKTS) are Lumenal-facing. The chain crosses the membrane as a helical span at residues 345–365 (HAWAGQDIFGICMMINVLQVA). Residues 366 to 374 (RLPNIRVAT) are Cytoplasmic-facing. The helical transmembrane segment at 375–395 (ILLCCAFFYDIFWVFISPLIF) threads the bilayer. Asp384 is a catalytic residue. The Lumenal portion of the chain corresponds to 396–428 (KQSVMIAVARGSKDTGESIPMLLRIPRLSDPWG). The helical transmembrane segment at 429–449 (GYNMIGFGDILFPGLLICFIF) threads the bilayer. Asp437 is an active-site residue. Residues 450–463 (RFDKENNKGVSNGY) lie on the Cytoplasmic side of the membrane. The helical transmembrane segment at 464-484 (FPWLMFGYGLGLFLTYLGLYV) threads the bilayer. The Lumenal segment spans residues 485–489 (MNGHG). A helical membrane pass occupies residues 490–510 (QPALLYLVPCTLGITVILGLV). The short motif at 491-493 (PAL) is the PAL element. Over 511–536 (RKELRDLWNYGTQQPSAADVNPSPEA) the chain is Cytoplasmic.

Belongs to the peptidase A22B family. Glycosylated.

It localises to the endosome membrane. Functionally, intramembrane-cleaving aspartic protease (I-CLiP) that cleaves type II membrane signal peptides in the hydrophobic plane of the membrane. The sequence is that of Signal peptide peptidase-like 5 (SPPL5) from Arabidopsis thaliana (Mouse-ear cress).